Here is a 449-residue protein sequence, read N- to C-terminus: Mycosin-1 (449 aa).

The signal sequence occupies residues 1-23; sequence MQRVAVMVLAVLLALFSAPPAWA. C51 and C120 form a disulfide bridge. Residues 66–389 form the Peptidase S8 domain; that stretch reads PWANDYLRIQ…AGVIDPVAAL (324 aa). Residues D92 and H123 each act as charge relay system in the active site. Disordered stretches follow at residues 160 to 179 and 240 to 259; these read FQPKGARQDPNDPNTTQTAG and TGQDCSQNPPPDPSVPSDPR. The span at 170-179 shows a compositional bias: polar residues; that stretch reads NDPNTTQTAG. The cysteines at positions 206 and 244 are disulfide-linked. The active-site Charge relay system is the S334. The helical transmembrane segment at 421 to 441 threads the bilayer; the sequence is ITAVVIAGATLAFALGIGALA.

Belongs to the peptidase S8 family.

It localises to the cell membrane. Its function is as follows. May play a dual role in regulation of ESX-1 secretion and virulence. Acts as a protease that cleaves EspB. The protein is Mycosin-1 of Mycolicibacterium smegmatis (strain ATCC 700084 / mc(2)155) (Mycobacterium smegmatis).